The chain runs to 332 residues: 2,3-diketo-L-gulonate reductase (332 aa).

Residue His-44 is the Proton donor of the active site. NAD(+)-binding positions include 168–174 (ITMVDMS), 224–225 (WK), and 304–306 (GHE).

The protein belongs to the LDH2/MDH2 oxidoreductase family. DlgD subfamily. In terms of assembly, homodimer.

The protein localises to the cytoplasm. It catalyses the reaction 3-dehydro-L-gulonate + NAD(+) = 2,3-dioxo-L-gulonate + NADH + H(+). It carries out the reaction 3-dehydro-L-gulonate + NADP(+) = 2,3-dioxo-L-gulonate + NADPH + H(+). Catalyzes the reduction of 2,3-diketo-L-gulonate in the presence of NADH, to form 3-keto-L-gulonate. This Shigella boydii serotype 4 (strain Sb227) protein is 2,3-diketo-L-gulonate reductase.